The sequence spans 152 residues: Transcriptional repressor NrdR (152 aa).

The segment at 3 to 34 (CPFCNHGELKVIDSRNAPEANAIKRRRECLNC) is a zinc-finger region. One can recognise an ATP-cone domain in the interval 48–138 (LQVLKRDGRY…VYRRFKDVGE (91 aa)).

It belongs to the NrdR family. It depends on Zn(2+) as a cofactor.

Its function is as follows. Negatively regulates transcription of bacterial ribonucleotide reductase nrd genes and operons by binding to NrdR-boxes. This is Transcriptional repressor NrdR from Chlamydia abortus (strain DSM 27085 / S26/3) (Chlamydophila abortus).